A 197-amino-acid chain; its full sequence is Presequence translocated-associated motor subunit PAM17, mitochondrial (197 aa).

The transit peptide at 1 to 14 directs the protein to the mitochondrion; the sequence is MFTSAIRLSSQRLF. The next 2 membrane-spanning stretches (helical) occupy residues 64 to 84 and 103 to 123; these read INVG…WAYL and VISA…PIVG.

The protein belongs to the PAM17 family. As to quaternary structure, component of the PAM complex, at least composed of mtHsp70, MGE1, TIM44, PAM16, PAM17 and PAM18/TIM14.

It localises to the mitochondrion inner membrane. Functionally, component of the PAM complex, a complex required for the translocation of transit peptide-containing proteins from the inner membrane into the mitochondrial matrix in an ATP-dependent manner. In the complex, it is required to organize PAM16-PAM18 (TIM16-TIM14) heterodimer. This chain is Presequence translocated-associated motor subunit PAM17, mitochondrial (PAM17), found in Saccharomyces cerevisiae (strain ATCC 204508 / S288c) (Baker's yeast).